Consider the following 383-residue polypeptide: Creatine kinase, testis isozyme (383 aa).

Residues 14-100 (KRLSPEEEFP…LDPIIEDRHG (87 aa)) enclose the Phosphagen kinase N-terminal domain. Residues 99–112 (HGGYKPTDKHKTDL) show a composition bias toward basic and acidic residues. The disordered stretch occupies residues 99–119 (HGGYKPTDKHKTDLNPDNLKG). The region spanning 127-369 (YVISSRVRTG…KLLVEMEKKL (243 aa)) is the Phosphagen kinase C-terminal domain. Residues 130 to 134 (SSRVR), H193, R238, R294, 322 to 327 (RGTGGV), and D337 each bind ATP.

This sequence belongs to the ATP:guanido phosphotransferase family. As to expression, exists in many tissues, but preferentially in testis.

The enzyme catalyses creatine + ATP = N-phosphocreatine + ADP + H(+). Functionally, reversibly catalyzes the transfer of phosphate between ATP and various phosphogens (e.g. creatine phosphate). Creatine kinase isoenzymes play a central role in energy transduction in tissues with large, fluctuating energy demands, such as skeletal muscle, heart, brain and spermatozoa. The polypeptide is Creatine kinase, testis isozyme (tck1) (Oncorhynchus mykiss (Rainbow trout)).